The primary structure comprises 138 residues: MNIIDRFEQENISKRTANKKIPDFEAGDTVKVTVKIVDRSIEKDGKEKLTERFQAYEGVVIAKRNRSITSSFLVRKISHGEGVERRFMTYSPIVHSIDVVKYGVVRRAKLYYLRNRSGKSARIKERHIPIAKTKAAKA.

Belongs to the bacterial ribosomal protein bL19 family.

This protein is located at the 30S-50S ribosomal subunit interface and may play a role in the structure and function of the aminoacyl-tRNA binding site. The sequence is that of Large ribosomal subunit protein bL19 from Rickettsia peacockii (strain Rustic).